Reading from the N-terminus, the 493-residue chain is Chitinase 1 (493 aa).

An N-terminal signal peptide occupies residues 1–20; sequence MISCNILGITIAAFITSTLA. A GH18 domain is found at 27 to 318; sequence VNVMYYWGQN…HGSSAALGQA (292 aa). The active-site Proton donor is glutamate 164.

The protein belongs to the glycosyl hydrolase 18 family. Chitinase class III subfamily.

It catalyses the reaction Random endo-hydrolysis of N-acetyl-beta-D-glucosaminide (1-&gt;4)-beta-linkages in chitin and chitodextrins.. In Rhizopus niveus, this protein is Chitinase 1 (CHI1).